The sequence spans 126 residues: Heavy metal-associated isoprenylated plant protein 14 (126 aa).

The HMA domain occupies 3-69 (AKNAVLQLSI…LCNTEIVSVD (67 aa)). At Cys-123 the chain carries Cysteine methyl ester. Residue Cys-123 is the site of S-farnesyl cysteine attachment. A propeptide spans 124–126 (VIM) (removed in mature form).

This sequence belongs to the HIPP family.

In terms of biological role, probable heavy-metal-binding protein. The sequence is that of Heavy metal-associated isoprenylated plant protein 14 from Arabidopsis thaliana (Mouse-ear cress).